Reading from the N-terminus, the 325-residue chain is Protease HtpX homolog 2 (325 aa).

A run of 2 helical transmembrane segments spans residues 17–37 (IAIL…FFGF) and 42–62 (LLIT…WLFG). His146 serves as a coordination point for Zn(2+). Residue Glu147 is part of the active site. His150 lines the Zn(2+) pocket. The next 2 membrane-spanning stretches (helical) occupy residues 158–178 (LLLA…GLWW) and 195–215 (ILFL…LFVL). Glu222 is a binding site for Zn(2+).

Belongs to the peptidase M48B family. It depends on Zn(2+) as a cofactor.

The protein resides in the cell membrane. This chain is Protease HtpX homolog 2, found in Sulfurisphaera tokodaii (strain DSM 16993 / JCM 10545 / NBRC 100140 / 7) (Sulfolobus tokodaii).